We begin with the raw amino-acid sequence, 337 residues long: Inositol 2-dehydrogenase (337 aa).

The protein belongs to the Gfo/Idh/MocA family. As to quaternary structure, homotetramer.

The catalysed reaction is myo-inositol + NAD(+) = scyllo-inosose + NADH + H(+). In terms of biological role, involved in the oxidation of myo-inositol (MI) to 2-keto-myo-inositol (2KMI or 2-inosose). In Arthrobacter sp. (strain FB24), this protein is Inositol 2-dehydrogenase.